Consider the following 287-residue polypeptide: Uroplakin-3a (287 aa).

The first 18 residues, M1–A18, serve as a signal peptide directing secretion. Residues V19–G207 are Lumenal-facing. Residues N74, N139, and N170 are each glycosylated (N-linked (GlcNAc...) asparagine). Residues M208–V235 form a helical membrane-spanning segment. At D236 to D287 the chain is on the cytoplasmic side. Positions G242–D287 are disordered. A compositionally biased stretch (polar residues) spans A261–N270.

It belongs to the uroplakin-3 family. As to quaternary structure, heterodimer with uroplakin-1B (UPK1B). In terms of tissue distribution, expressed in ureter.

It is found in the endoplasmic reticulum membrane. In terms of biological role, component of the asymmetric unit membrane (AUM); a highly specialized biomembrane elaborated by terminally differentiated urothelial cells. May play an important role in AUM-cytoskeleton interaction in terminally differentiated urothelial cells. It also contributes to the formation of urothelial glycocalyx which may play an important role in preventing bacterial adherence. This is Uroplakin-3a (UPK3A) from Homo sapiens (Human).